A 140-amino-acid polypeptide reads, in one-letter code: 3-hydroxyacyl-[acyl-carrier-protein] dehydratase FabZ (140 aa).

His-48 is a catalytic residue.

It belongs to the thioester dehydratase family. FabZ subfamily.

The protein localises to the cytoplasm. The catalysed reaction is a (3R)-hydroxyacyl-[ACP] = a (2E)-enoyl-[ACP] + H2O. In terms of biological role, involved in unsaturated fatty acids biosynthesis. Catalyzes the dehydration of short chain beta-hydroxyacyl-ACPs and long chain saturated and unsaturated beta-hydroxyacyl-ACPs. In Caldicellulosiruptor bescii (strain ATCC BAA-1888 / DSM 6725 / KCTC 15123 / Z-1320) (Anaerocellum thermophilum), this protein is 3-hydroxyacyl-[acyl-carrier-protein] dehydratase FabZ.